The following is a 377-amino-acid chain: L-arabinitol 4-dehydrogenase (377 aa).

Zn(2+)-binding residues include Cys-66, His-91, Glu-92, Cys-121, Cys-124, Cys-127, Cys-135, and Glu-176. Residues 203 to 204, Asp-224, Arg-229, Ile-296, and 320 to 322 contribute to the NAD(+) site; these read PI and QYR.

Belongs to the zinc-containing alcohol dehydrogenase family. In terms of assembly, homotetramer. Zn(2+) is required as a cofactor. The N-terminus is blocked.

It catalyses the reaction L-arabinitol + NAD(+) = L-xylulose + NADH + H(+). Its pathway is carbohydrate degradation; L-arabinose degradation via L-arabinitol; D-xylulose 5-phosphate from L-arabinose (fungal route): step 2/5. Catalyzes the NAD-dependent oxidation of L-arabinitol to L-xylulose in the fungal L-arabinose catabolic pathway. L-arabinose catabolism is important for using plant material as a carbon source. Can partially compensate for xylitol dehydrogenase in xdh1 mutants. Also oxidizes galactitol to L-xylo-3-hexulose as an alternative to the standard Leloir pathway for D-galactose metabolism. NADP cannot act as a cosubstrate. The chain is L-arabinitol 4-dehydrogenase (lad1) from Hypocrea jecorina (Trichoderma reesei).